Here is a 36-residue protein sequence, read N- to C-terminus: Cytochrome b6-f complex subunit 5 (36 aa).

A helical transmembrane segment spans residues 5 to 25; it reads LLSGIVLGLIPITILGLLMAA.

Belongs to the PetG family. The 4 large subunits of the cytochrome b6-f complex are cytochrome b6, subunit IV (17 kDa polypeptide, PetD), cytochrome f and the Rieske protein, while the 4 small subunits are PetG, PetL, PetM and PetN. The complex functions as a dimer.

The protein resides in the plastid. It localises to the chloroplast thylakoid membrane. Component of the cytochrome b6-f complex, which mediates electron transfer between photosystem II (PSII) and photosystem I (PSI), cyclic electron flow around PSI, and state transitions. PetG is required for either the stability or assembly of the cytochrome b6-f complex. The chain is Cytochrome b6-f complex subunit 5 from Cyanidioschyzon merolae (strain NIES-3377 / 10D) (Unicellular red alga).